A 554-amino-acid chain; its full sequence is Valerianol synthase TPS1A (554 aa).

Mg(2+) contacts are provided by Asp307 and Asp311. Residues 326 to 330 carry the DDXXD motif motif; sequence VQRWD. Residues Asp452, Ser456, and Glu460 each contribute to the Mg(2+) site.

Belongs to the terpene synthase family. Mg(2+) serves as cofactor. In terms of tissue distribution, expressed in flowers.

It catalyses the reaction (2E,6E)-farnesyl diphosphate + H2O = valerianol + diphosphate. The protein operates within secondary metabolite biosynthesis; terpenoid biosynthesis. Its function is as follows. Terpene synthase that catalyzes the biosynthesis of the terpene valerianol, which is a volatile compound of floral scent. This Camellia hiemalis (Camellia) protein is Valerianol synthase TPS1A.